Consider the following 410-residue polypeptide: FAS1 domain-containing protein CaO19.3004 (410 aa).

Positions 1 to 18 (MKLSKLLQLAVFSSLVTS) are cleaved as a signal peptide. Basic and acidic residues-rich tracts occupy residues 64–73 (NAKFKRDPKN) and 83–96 (GSAE…REPK). Positions 64–98 (NAKFKRDPKNVIDPASLKEGSAEEEQKDKREPKNL) are disordered. Positions 247–407 (NNLLQSILPQ…GFVLIINDSL (161 aa)) constitute an FAS1 domain.

It is found in the vacuole. The polypeptide is FAS1 domain-containing protein CaO19.3004 (Candida albicans (strain SC5314 / ATCC MYA-2876) (Yeast)).